We begin with the raw amino-acid sequence, 375 residues long: N-acetyldiaminopimelate deacetylase (375 aa).

Residue aspartate 69 is part of the active site. The active-site Proton acceptor is the glutamate 128.

The protein belongs to the peptidase M20A family. N-acetyldiaminopimelate deacetylase subfamily.

It carries out the reaction N-acetyl-(2S,6S)-2,6-diaminopimelate + H2O = (2S,6S)-2,6-diaminopimelate + acetate. The protein operates within amino-acid biosynthesis; L-lysine biosynthesis via DAP pathway; LL-2,6-diaminopimelate from (S)-tetrahydrodipicolinate (acetylase route): step 3/3. Its function is as follows. Catalyzes the conversion of N-acetyl-diaminopimelate to diaminopimelate and acetate. The protein is N-acetyldiaminopimelate deacetylase of Priestia megaterium (strain ATCC 12872 / QMB1551) (Bacillus megaterium).